A 147-amino-acid chain; its full sequence is uncharacterized protein (147 aa).

A Rhodanese domain is found at 50 to 140 (NQKKAIIVDT…WNSENLPTTF (91 aa)).

This is an uncharacterized protein from Buchnera aphidicola subsp. Schizaphis graminum (strain Sg).